The primary structure comprises 256 residues: Cell division protein ZapD (256 aa).

Belongs to the ZapD family. In terms of assembly, interacts with FtsZ.

It localises to the cytoplasm. In terms of biological role, cell division factor that enhances FtsZ-ring assembly. Directly interacts with FtsZ and promotes bundling of FtsZ protofilaments, with a reduction in FtsZ GTPase activity. This Aromatoleum aromaticum (strain DSM 19018 / LMG 30748 / EbN1) (Azoarcus sp. (strain EbN1)) protein is Cell division protein ZapD.